The following is a 972-amino-acid chain: Mast/stem cell growth factor receptor Kit (972 aa).

Positions 1–25 are cleaved as a signal peptide; that stretch reads MRGARGAWDFLCVLLLLLRVQTGSS. Residues 26–520 lie on the Extracellular side of the membrane; sequence QPSVSPEEAS…QIQPHTLFTP (495 aa). Ig-like C2-type domains are found at residues 27–112, 121–205, 212–308, 317–410, and 413–507; these read PSVS…VFVR, DRSL…LKVR, PVVS…LEVV, PMIN…VYVN, and PEIL…FNFA. Residues cysteine 58 and cysteine 97 are joined by a disulfide bond. 2 N-linked (GlcNAc...) asparagine glycosylation sites follow: asparagine 130 and asparagine 145. 3 disulfide bridges follow: cysteine 136-cysteine 186, cysteine 151-cysteine 183, and cysteine 233-cysteine 290. Residues asparagine 283, asparagine 300, asparagine 320, asparagine 352, asparagine 367, asparagine 463, and asparagine 486 are each glycosylated (N-linked (GlcNAc...) asparagine). A disulfide bridge connects residues cysteine 428 and cysteine 491. A helical transmembrane segment spans residues 521-541; the sequence is LLIGFVVVAGMMCIIVMILTY. Residues 542–972 are Cytoplasmic-facing; the sequence is KYLQKPMYEV…SQPLLVRDDV (431 aa). Residues tyrosine 543 and tyrosine 549 each carry the phosphotyrosine modification. Mg(2+) is bound at residue tyrosine 564. A phosphotyrosine; by autocatalysis mark is found at tyrosine 564 and tyrosine 566. An important for interaction with phosphotyrosine-binding proteins region spans residues 564–566; it reads YVY. One can recognise a Protein kinase domain in the interval 585 to 933; it reads LSFGKTLGAG…ISESTNHIYS (349 aa). ATP-binding positions include 592–599, lysine 619, and 667–673; these read GAGAFGKV and EYCCYGD. Residues tyrosine 699 and tyrosine 717 each carry the phosphotyrosine; by autocatalysis modification. The residue at position 726 (tyrosine 726) is a Phosphotyrosine. Phosphoserine; by PKC/PRKCA is present on residues serine 737 and serine 742. The Proton acceptor role is filled by aspartate 788. Arginine 792 lines the ATP pocket. Residues asparagine 793 and aspartate 806 each contribute to the Mg(2+) site. Position 817 is a phosphoserine (serine 817). Residue tyrosine 819 is modified to Phosphotyrosine; by autocatalysis. Position 887 is a phosphoserine (serine 887). Tyrosine 896 is modified (phosphotyrosine). Tyrosine 932 carries the phosphotyrosine; by autocatalysis modification. Serine 955 is modified (phosphoserine).

It belongs to the protein kinase superfamily. Tyr protein kinase family. CSF-1/PDGF receptor subfamily. Monomer in the absence of bound KITLG/SCF. Homodimer in the presence of bound KITLG/SCF, forming a heterotetramer with two KITLG/SCF molecules. Interacts (via phosphorylated tyrosine residues) with the adapter proteins GRB2 and GRB7 (via SH2 domain), and SH2B2/APS. Interacts (via C-terminus) with MPDZ (via the tenth PDZ domain). Interacts (via phosphorylated tyrosine residues) with PIK3R1 and PIK3CD. Interacts (via phosphorylated tyrosine) with CRK (isoform Crk-II), FYN, SHC1 and MATK/CHK (via SH2 domain). Interacts with LYN and FES/FPS. Interacts (via phosphorylated tyrosine residues) with the protein phosphatases PTPN6/SHP-1 (via SH2 domain), PTPN11/SHP-2 (via SH2 domain) and PTPRU. Interacts with PLCG1. Interacts with DOK1 and TEC. Interacts with IL1RAP (independent of stimulation with KITLG/SCF). A mast cell-specific KITLG/SCF-induced interleukin-33 signaling complex contains IL1RL1, IL1RAP, KIT and MYD88. Post-translationally, ubiquitinated by SOCS6. KIT is rapidly ubiquitinated after autophosphorylation induced by KITLG/SCF binding, leading to internalization and degradation. Autophosphorylated on tyrosine residues. KITLG/SCF binding promotes autophosphorylation. Phosphorylated tyrosine residues are important for interaction with specific binding partners.

The protein localises to the cell membrane. It carries out the reaction L-tyrosyl-[protein] + ATP = O-phospho-L-tyrosyl-[protein] + ADP + H(+). With respect to regulation, present in an inactive conformation in the absence of bound ligand. KITLG/SCF binding leads to dimerization and activation by autophosphorylation on tyrosine residues. Activity is down-regulated by PRKCA-mediated phosphorylation on serine residues. Functionally, tyrosine-protein kinase that acts as a cell-surface receptor for the cytokine KITLG/SCF and plays an essential role in the regulation of cell survival and proliferation, hematopoiesis, stem cell maintenance, gametogenesis, mast cell development, migration and function, and in melanogenesis. In response to KITLG/SCF binding, KIT can activate several signaling pathways. Phosphorylates PIK3R1, PLCG1, SH2B2/APS and CBL. Activates the AKT1 signaling pathway by phosphorylation of PIK3R1, the regulatory subunit of phosphatidylinositol 3-kinase. Activated KIT also transmits signals via GRB2 and activation of RAS, RAF1 and the MAP kinases MAPK1/ERK2 and/or MAPK3/ERK1. Promotes activation of STAT family members STAT1, STAT3, STAT5A and STAT5B. Activation of PLCG1 leads to the production of the cellular signaling molecules diacylglycerol and inositol 1,4,5-trisphosphate. KIT signaling is modulated by protein phosphatases, and by rapid internalization and degradation of the receptor. Activated KIT promotes phosphorylation of the protein phosphatases PTPN6/SHP-1 and PTPRU, and of the transcription factors STAT1, STAT3, STAT5A and STAT5B. Promotes phosphorylation of PIK3R1, CBL, CRK (isoform Crk-II), LYN, MAPK1/ERK2 and/or MAPK3/ERK1, PLCG1, SRC and SHC1. The protein is Mast/stem cell growth factor receptor Kit (KIT) of Callithrix jacchus (White-tufted-ear marmoset).